Here is a 412-residue protein sequence, read N- to C-terminus: Imidazolonepropionase (412 aa).

Positions 76 and 78 each coordinate Fe(3+). Positions 76 and 78 each coordinate Zn(2+). 4-imidazolone-5-propanoate is bound by residues Arg85, Tyr148, and His181. Tyr148 contacts N-formimidoyl-L-glutamate. His242 contacts Fe(3+). Position 242 (His242) interacts with Zn(2+). Glu245 serves as a coordination point for 4-imidazolone-5-propanoate. Asp317 contributes to the Fe(3+) binding site. Asp317 serves as a coordination point for Zn(2+). 2 residues coordinate N-formimidoyl-L-glutamate: Asn319 and Gly321. Residue Ser322 coordinates 4-imidazolone-5-propanoate.

This sequence belongs to the metallo-dependent hydrolases superfamily. HutI family. Zn(2+) serves as cofactor. Fe(3+) is required as a cofactor.

Its subcellular location is the cytoplasm. The enzyme catalyses 4-imidazolone-5-propanoate + H2O = N-formimidoyl-L-glutamate. Its pathway is amino-acid degradation; L-histidine degradation into L-glutamate; N-formimidoyl-L-glutamate from L-histidine: step 3/3. Catalyzes the hydrolytic cleavage of the carbon-nitrogen bond in imidazolone-5-propanoate to yield N-formimidoyl-L-glutamate. It is the third step in the universal histidine degradation pathway. This chain is Imidazolonepropionase, found in Staphylococcus aureus (strain USA300 / TCH1516).